Here is a 104-residue protein sequence, read N- to C-terminus: Large ribosomal subunit protein uL24 (104 aa).

It belongs to the universal ribosomal protein uL24 family. In terms of assembly, part of the 50S ribosomal subunit.

One of two assembly initiator proteins, it binds directly to the 5'-end of the 23S rRNA, where it nucleates assembly of the 50S subunit. In terms of biological role, one of the proteins that surrounds the polypeptide exit tunnel on the outside of the subunit. The chain is Large ribosomal subunit protein uL24 from Shewanella amazonensis (strain ATCC BAA-1098 / SB2B).